The sequence spans 113 residues: UPF0212 protein AF_0282 (113 aa).

It belongs to the UPF0212 family.

This Archaeoglobus fulgidus (strain ATCC 49558 / DSM 4304 / JCM 9628 / NBRC 100126 / VC-16) protein is UPF0212 protein AF_0282.